We begin with the raw amino-acid sequence, 321 residues long: 37 kDa cell surface protein (321 aa).

It is found in the secreted. The protein resides in the cell wall. The chain is 37 kDa cell surface protein (CSP37) from Candida albicans (Yeast).